The following is a 148-amino-acid chain: SsrA-binding protein (148 aa).

Residues A119–R148 form a disordered region. Over residues K127–R142 the composition is skewed to basic and acidic residues.

Belongs to the SmpB family.

It localises to the cytoplasm. Required for rescue of stalled ribosomes mediated by trans-translation. Binds to transfer-messenger RNA (tmRNA), required for stable association of tmRNA with ribosomes. tmRNA and SmpB together mimic tRNA shape, replacing the anticodon stem-loop with SmpB. tmRNA is encoded by the ssrA gene; the 2 termini fold to resemble tRNA(Ala) and it encodes a 'tag peptide', a short internal open reading frame. During trans-translation Ala-aminoacylated tmRNA acts like a tRNA, entering the A-site of stalled ribosomes, displacing the stalled mRNA. The ribosome then switches to translate the ORF on the tmRNA; the nascent peptide is terminated with the 'tag peptide' encoded by the tmRNA and targeted for degradation. The ribosome is freed to recommence translation, which seems to be the essential function of trans-translation. This Neisseria meningitidis serogroup C (strain 053442) protein is SsrA-binding protein.